Reading from the N-terminus, the 141-residue chain is MQLQLIITTPNGIFFNEKVDIVTVVTAGGHIGIQYGHQPLISTIEISELHINTEGHKDYRICSINGGLLYVEKDKANIITGAIEFKEDIDIEKARREHDYLVEILSNSKNKDSDYFRNELKLKKVINRLKISSNSTQSPKK.

This sequence belongs to the ATPase epsilon chain family. As to quaternary structure, F-type ATPases have 2 components, CF(1) - the catalytic core - and CF(0) - the membrane proton channel. CF(1) has five subunits: alpha(3), beta(3), gamma(1), delta(1), epsilon(1). CF(0) has three main subunits: a, b and c.

The protein resides in the cell membrane. Its function is as follows. Produces ATP from ADP in the presence of a proton gradient across the membrane. In Mycoplasmopsis pulmonis (strain UAB CTIP) (Mycoplasma pulmonis), this protein is ATP synthase epsilon chain (atpC).